Reading from the N-terminus, the 1254-residue chain is MNYIPTQTFYGRRWRPRPAFRPWQVPMQPTPTMVTPMLQAPDLQAQQMQQLISAVSALTTKQNVKAPKGQRKQKQQKPKEKKEKQKKKPTXKKKQQQKPKPQAKKKKPGRRERMCMKIENDCIFEVKLDGKVTGYACLVGDKVMKPAHVKGTIDNPDLAKLTYKKSSKYDLECAQIPVHMKSDASKYTHEKPEGHYNWHHGAVQYSXGRFTIPTGAGKPGDSGRPIFDNKGRVVAIVLGGANEGARTALSVVTWTKDMVTRVTPEGTEEWSAALMMCILANTSFPCSSPPCYPCCYEKQPEQTLRMLEDNVNRPGYYELLEASMTCRNRSRHRRSVIEHFNVYKATRPYLAXCADCGDGYFCYSPVAIEKIRDEASDGMLKIQVSAQIGLDKAGTHAHTKMRYMAGHDVQESKRDSLRVYTSAACSIHGTMGHFIVAHCPPGDYLKXSFEDANSHVKACKVQYKHDPLPVGREKFVVRPHFGVELPCTSYQLTTAPTDEEIDMHTPPDIPDRTLLSQTAGNVKITAGGRTIRYNCTCGRDNVGTTSTDKTINTCKIDQCHAAVTSHDKWXFTSPFVPRADQTARKGKVHVPFPLTNVTCRVPLARAPDVTYGKKEVTLRLHPDHPTXFSYRSLGAVPHPYEEWVDKFSERIIPVTEEGIEYQWGNNPPVRLWAQLTTEGKPHGWPHEIIQYYYGLYPAATIAAVSGASLMALLTLAATCCMLATARRKCLTPYALTPGAVVPLTLGLLXCAPRANAASFAETMAYLWDENKTLFWMEXXXXXXALALLACCIKSLICCCKPFSFLVLLSLGASAKAYEHTATIPNVVGFPYKAHIERNXFSPMTLQLEVVXXSLEPTLNLEYITCEYKTVVPSPFIKCCGTSECSSKEQPDYQCKVYTGVYPFMWGGAYCFCDSENTQLSEAYVDRSDVCKHDHALAYKAHTASLKATIRISYGTINQTTEAFVNGEHAVNVGGSKFIFGPISTAWSPFDNKIVVYKDDVYNQDFPPYGSGQPGRFGDIQSRTVESKDLYANTALKLSRPSPGVVHVPYTQTPSGFKYWLKEKGSSLNTKAPFGCKIKTNPVRAMDCAVGSIPVSMDIPDSAFTRVVDAPAVTDLSCQVAVCTHSSDFGXVATLSYKTDKPGKCAVHSHSNVATLQEATVDVKEDGKVTVHFSXXSASPAFKVSVCDAKTTCTAACEPPKDHIVPYGASHNNQVFPDMSGTAMTWVQRMASGLGGLALIAVVVLVLVTCITMRR.

Residues 43-77 (LQAQQMQQLISAVSALTTKQNVKAPKGQRKQKQQK) are host transcription inhibition. A disordered region spans residues 60-112 (TKQNVKAPKGQRKQKQQKPKEKKEKQKKKPTXKKKQQQKPKPQAKKKKPGRRE). The short motif at 70–108 (QRKQKQQKPKEKKEKQKKKPTXKKKQQQKPKPQAKKKKP) is the Nuclear localization signal element. A compositionally biased stretch (basic residues) spans 84 to 110 (KQKKKPTXKKKQQQKPKPQAKKKKPGR). Residues 95-123 (QQQKPKPQAKKKKPGRRERMCMKIENDCI) are binding to the viral RNA. The segment at 108-122 (PGRRERMCMKIENDC) is ribosome-binding. C122 and C137 form a disulfide bridge. The Peptidase S3 domain occupies 122–270 (CIFEVKLDGK…RVTPEGTEEW (149 aa)). Residue H148 is the Charge relay system of the active site. Residues 153 to 163 (IDNPDLAKLTY) carry the Nuclear export signal motif. Positions 164-169 (KKSSKY) are interaction with spike glycoprotein E2. D170 serves as the catalytic Charge relay system. The tract at residues 192–202 (PEGHYNWHHGA) is dimerization of the capsid protein. S222 acts as the Charge relay system in catalysis. The segment at 228–232 (DNKGR) is dimerization of the capsid protein. Topologically, residues 270 to 694 (WSAALMMCIL…PHEIIQYYYG (425 aa)) are extracellular. The interval 271–282 (SAALMMCILANT) is functions as an uncleaved signal peptide for the precursor of protein E3/E2. 3 disulfides stabilise this stretch: C277-C286, C291-C295, and C294-C326. An N-linked (GlcNAc...) asparagine; by host glycan is attached at N281. N328 carries N-linked (GlcNAc...) asparagine; by host glycosylation. 6 disulfide bridges follow: C353/C459, C356/C362, C425/C439, C487/C599, C535/C559, and C537/C554. Interaction with host Mxra8 receptor regions lie at residues 360–363 (YFCY) and 396–398 (HAH). Residues 518 to 521 (TAGN) are interaction with host Mxra8 receptor. Residue N534 is glycosylated (N-linked (GlcNAc...) asparagine; by host). Residues 550–556 (TINTCKI) form an interaction with host Mxra8 receptor region. An N-linked (GlcNAc...) asparagine; by host glycan is attached at N596. Residues 695–715 (LYPAATIAAVSGASLMALLTL) form a helical membrane-spanning segment. The Cytoplasmic portion of the chain corresponds to 716 to 756 (AATCCMLATARRKCLTPYALTPGAVVPLTLGLLXCAPRANA). C719 carries S-palmitoyl cysteine; by host lipidation. Residues 724-728 (TARRK) form an interaction with the capsid protein region. S-palmitoyl cysteine; by host attachment occurs at residues C729 and C750. Residues 729–749 (CLTPYALTPGAVVPLTLGLLX) are transient transmembrane before p62-6K protein processing. An intrachain disulfide couples C729 to C750. Residues 757–771 (ASFAETMAYLWDENK) are Extracellular-facing. The helical transmembrane segment at 772–792 (TLFWMEXXXXXXALALLACCI) threads the bilayer. K793 is a topological domain (cytoplasmic). Residues 794–814 (SLICCCKPFSFLVLLSLGASA) form a helical membrane-spanning segment. At 815 to 1231 (KAYEHTATIP…AMTWVQRMAS (417 aa)) the chain is on the extracellular side. 4 cysteine pairs are disulfide-bonded: C865–C930, C878–C910, C879–C912, and C884–C894. An E1 fusion peptide loop region spans residues 900–917 (VYPFMWGGAYCFCDSENT). An N-linked (GlcNAc...) asparagine; by host glycan is attached at N957. 4 disulfide bridges follow: C1075-C1087, C1117-C1192, C1122-C1196, and C1144-C1186. Residues 1232–1252 (GLGGLALIAVVVLVLVTCITM) form a helical membrane-spanning segment. The S-palmitoyl cysteine; by host moiety is linked to residue C1249. Residue C1249 is the site of S-stearoyl cysteine; by host attachment. At 1253–1254 (RR) the chain is on the cytoplasmic side.

As to quaternary structure, homodimer. Homomultimer. Interacts with host karyopherin KPNA4; this interaction allows the nuclear import of the viral capsid protein. Interacts with spike glycoprotein E2. Interacts with host IRAK1; the interaction leads to inhibition of IRAK1-dependent signaling. In terms of assembly, the precursor of protein E3/E2 and E1 form a heterodimer shortly after synthesis. The precursor of protein E3/E2 and E1 form a heterodimer shortly after synthesis. Processing of the precursor of protein E3/E2 into E2 and E3 results in a heterodimer of the spike glycoproteins E2 and E1. Spike at virion surface are constituted of a trimer of E2-E1 heterodimers. After target cell attachment and endocytosis, E1 change conformation to form homotrimers. Interacts with 6K protein. As to quaternary structure, interacts with spike glycoprotein E1. Processing of the precursor of protein E3/E2 into E2 and E3 results in a heterodimer of the spike glycoproteins E2 and E1. Spike at virion surface are constituted of a trimer of E2-E1 heterodimers. Interacts with 6K protein. Interacts with host MXRA8; this interaction mediates virus entry. Post-translationally, structural polyprotein: Specific enzymatic cleavages in vivo yield mature proteins. Capsid protein is auto-cleaved during polyprotein translation, unmasking a signal peptide at the N-terminus of the precursor of E3/E2. The remaining polyprotein is then targeted to the host endoplasmic reticulum, where host signal peptidase cleaves it into pE2, 6K and E1 proteins. pE2 is further processed to mature E3 and E2 by host furin in trans-Golgi vesicle. Palmitoylated via thioester bonds. These palmitoylations may induce disruption of the C-terminus transmembrane. This would result in the reorientation of E2 C-terminus from lumenal to cytoplasmic side. In terms of processing, N-glycosylated. Post-translationally, palmitoylated via thioester bonds.

It is found in the virion. The protein resides in the host cytoplasm. The protein localises to the host cell membrane. Its subcellular location is the host nucleus. It localises to the virion membrane. It is found in the host Golgi apparatus. The protein resides in the host trans-Golgi network. The protein localises to the host endoplasmic reticulum. It catalyses the reaction Autocatalytic release of the core protein from the N-terminus of the togavirus structural polyprotein by hydrolysis of a -Trp-|-Ser- bond.. Its function is as follows. Forms an icosahedral capsid with a T=4 symmetry composed of 240 copies of the capsid protein surrounded by a lipid membrane through which penetrate 80 spikes composed of trimers of E1-E2 heterodimers. The capsid protein binds to the viral RNA genome at a site adjacent to a ribosome binding site for viral genome translation following genome release. Possesses a protease activity that results in its autocatalytic cleavage from the nascent structural protein. Following its self-cleavage, the capsid protein transiently associates with ribosomes, and within several minutes the protein binds to viral RNA and rapidly assembles into icosahedric core particles. The resulting nucleocapsid eventually associates with the cytoplasmic domain of the spike glycoprotein E2 at the cell membrane, leading to budding and formation of mature virions. In case of infection, new virions attach to target cells and after clathrin-mediated endocytosis their membrane fuses with the host endosomal membrane. This leads to the release of the nucleocapsid into the cytoplasm, followed by an uncoating event necessary for the genomic RNA to become accessible. The uncoating might be triggered by the interaction of capsid proteins with ribosomes. Binding of ribosomes would release the genomic RNA since the same region is genomic RNA-binding and ribosome-binding. Specifically inhibits interleukin-1 receptor-associated kinase 1/IRAK1-dependent signaling during viral entry, representing a means by which the alphaviruses may evade innate immune detection and activation prior to viral gene expression. Provides the signal sequence for the translocation of the precursor of protein E3/E2 to the host endoplasmic reticulum. Furin-cleaved E3 remains associated with spike glycoprotein E1 and mediates pH protection of the latter during the transport via the secretory pathway. After virion release from the host cell, the assembly protein E3 is gradually released in the extracellular space. In terms of biological role, plays a role in viral attachment to target host cell, by binding to the cell receptor MXRA8. The host LDLR may also act as a cell receptor for viral entry. Synthesized as a p62 precursor which is processed by furin at the cell membrane just before virion budding, giving rise to E2-E1 heterodimer. The p62-E1 heterodimer is stable, whereas E2-E1 is unstable and dissociate at low pH. p62 is processed at the last step, presumably to avoid E1 fusion activation before its final export to cell surface. E2 C-terminus contains a transitory transmembrane that would be disrupted by palmitoylation, resulting in reorientation of the C-terminal tail from lumenal to cytoplasmic side. This step is critical since E2 C-terminus is involved in budding by interacting with capsid proteins. This release of E2 C-terminus in cytoplasm occurs lately in protein export, and precludes premature assembly of particles at the endoplasmic reticulum membrane. Functionally, acts as a viroporin that participates in virus glycoprotein processing and transport to the plasma membrane, cell permeabilization and budding of viral particles. The cation channel is permeable to Na(+)&gt;K(+)&gt;Ca(2+) in vitro. Disrupts the calcium homeostasis of the cell, probably at the endoplasmic reticulum level. This leads to cytoplasmic calcium elevation. Because of its lipophilic properties, the 6K protein is postulated to influence the selection of lipids that interact with the transmembrane domains of the glycoproteins, which, in turn, affects the deformability of the bilayer required for the extreme curvature that occurs as budding proceeds. Present in low amount in virions, about 3% compared to viral glycoproteins. Its function is as follows. Class II viral fusion protein. Fusion activity is inactive as long as E1 is bound to E2 in mature virion. After virus attachment to target cell via host MXRA8 and endocytosis, acidification of the endosome induce dissociation of E1/E2 heterodimer and concomitant trimerization of the E1 subunits. This E1 trimer is fusion active, and promotes release of viral nucleocapsid in cytoplasm after endosome and viral membrane fusion. Efficient fusion requires the presence of cholesterol and sphingolipid in the target membrane. This chain is Structural polyprotein, found in Ross river virus (strain NB5092) (RRV).